We begin with the raw amino-acid sequence, 101 residues long: Small ribosomal subunit protein uS14 (101 aa).

It belongs to the universal ribosomal protein uS14 family. Part of the 30S ribosomal subunit. Contacts proteins S3 and S10.

Binds 16S rRNA, required for the assembly of 30S particles and may also be responsible for determining the conformation of the 16S rRNA at the A site. The chain is Small ribosomal subunit protein uS14 from Beijerinckia indica subsp. indica (strain ATCC 9039 / DSM 1715 / NCIMB 8712).